Here is a 239-residue protein sequence, read N- to C-terminus: 1-(5-phosphoribosyl)-5-[(5-phosphoribosylamino)methylideneamino] imidazole-4-carboxamide isomerase (239 aa).

Asp8 serves as the catalytic Proton acceptor. Residue Asp129 is the Proton donor of the active site.

Belongs to the HisA/HisF family.

The protein resides in the cytoplasm. The enzyme catalyses 1-(5-phospho-beta-D-ribosyl)-5-[(5-phospho-beta-D-ribosylamino)methylideneamino]imidazole-4-carboxamide = 5-[(5-phospho-1-deoxy-D-ribulos-1-ylimino)methylamino]-1-(5-phospho-beta-D-ribosyl)imidazole-4-carboxamide. The protein operates within amino-acid biosynthesis; L-histidine biosynthesis; L-histidine from 5-phospho-alpha-D-ribose 1-diphosphate: step 4/9. The chain is 1-(5-phosphoribosyl)-5-[(5-phosphoribosylamino)methylideneamino] imidazole-4-carboxamide isomerase from Bacillus cereus (strain AH820).